The primary structure comprises 490 residues: MSRMAEQQLYIHGGYTSATSGRTFETINPANGNVLATVQAAGREDVDRAVKSAQQGQKIWAAMTAMERSRILRRAVDILRERNDELAKLETLDTGKAYSETSTVDIVTGADVLEYYAGLIPSLEGSQIPLRETSFVYTRREPLGVVAGIGAWNYPIQIALWKSAPALAAGNAMIFKPSEVTPLTALKLAEIYSEAGLPDGVFNVLPGVGAETGQYLTEHPGIAKVSFTGGVASGKKVMANSAASSLKEVTMELGGKSPLIVFDDADLDLAADIAMMANFFSSGQVCTNGTRVFVPAKCNAAFEQKILARVERIRAGDVFDPQTNFGPLVSFPHRDNVLRYIAKGKEEGARVLCGGDVLKGDGLDNGAWVAPTVFTDCSDEMTIVREEIFGPVMSILTYESEDEVIRRANDTDYGLAAGIVTADLNRAHRVIHQLEAGICWINTWGESPAEMPVGGYKHSGIGRENGVMTLQSYTQVKSIQVEMAKFQSIF.

K(+) is bound by residues threonine 26, isoleucine 27, and aspartate 93. An NAD(+)-binding site is contributed by 150–152 (GAW). The active-site Charge relay system is lysine 162. 176-179 (KPSE) is an NAD(+) binding site. Valine 180 lines the K(+) pocket. An NAD(+)-binding site is contributed by 230–233 (GVAS). Leucine 246 lines the K(+) pocket. The active-site Proton acceptor is the glutamate 252. Residues glycine 254, cysteine 286, and glutamate 387 each contribute to the NAD(+) site. The active-site Nucleophile is the cysteine 286. Cysteine 286 is modified (cysteine sulfenic acid (-SOH)). K(+) contacts are provided by lysine 457 and glycine 460. Catalysis depends on glutamate 464, which acts as the Charge relay system.

Belongs to the aldehyde dehydrogenase family. In terms of assembly, dimer of dimers. It depends on K(+) as a cofactor.

The enzyme catalyses betaine aldehyde + NAD(+) + H2O = glycine betaine + NADH + 2 H(+). Its pathway is amine and polyamine biosynthesis; betaine biosynthesis via choline pathway; betaine from betaine aldehyde: step 1/1. In terms of biological role, involved in the biosynthesis of the osmoprotectant glycine betaine. Catalyzes the irreversible oxidation of betaine aldehyde to the corresponding acid. The chain is Betaine aldehyde dehydrogenase from Escherichia coli O157:H7.